Here is a 131-residue protein sequence, read N- to C-terminus: Holo-[acyl-carrier-protein] synthase (131 aa).

2 residues coordinate Mg(2+): aspartate 8 and glutamate 59.

The protein belongs to the P-Pant transferase superfamily. AcpS family. Mg(2+) is required as a cofactor.

Its subcellular location is the cytoplasm. It catalyses the reaction apo-[ACP] + CoA = holo-[ACP] + adenosine 3',5'-bisphosphate + H(+). In terms of biological role, transfers the 4'-phosphopantetheine moiety from coenzyme A to a Ser of acyl-carrier-protein. The sequence is that of Holo-[acyl-carrier-protein] synthase from Rickettsia conorii (strain ATCC VR-613 / Malish 7).